The sequence spans 998 residues: Probable protein kinase DDB_G0277539 (998 aa).

Disordered stretches follow at residues 1–34 (MDFP…DFDQ), 65–207 (CEDQ…TNEF), 265–284 (INNN…FSSS), 316–367 (SNGS…NYSS), 380–420 (ERTN…PNSI), and 435–489 (RLQS…NNNN). A compositionally biased stretch (acidic residues) spans 23–32 (YDDDDDDDDF). Over residues 70–139 (QQQQQQSSSP…NNNNNNNNNN (70 aa)) the composition is skewed to low complexity. Basic residues predominate over residues 140–150 (SHHHHLRKGRR). Residues 166-177 (ASLSSTKTNMFP) show a composition bias toward polar residues. Low complexity-rich tracts occupy residues 184–203 (SSPS…QSQQ) and 265–274 (INNNYNNNNN). Residues 316–328 (SNGSYNKGNTFPS) show a composition bias toward polar residues. A compositionally biased stretch (basic and acidic residues) spans 330-340 (EVKRVRPDQRA). 2 stretches are compositionally biased toward low complexity: residues 393–415 (NVNN…NNNN) and 450–489 (NNNN…NNNN). In terms of domain architecture, Protein kinase spans 508–849 (FQELDLIGEG…AEQLLEHPLI (342 aa)). Residues 514–522 (IGEGSFGHV) and lysine 537 contribute to the ATP site. Aspartate 631 serves as the catalytic Proton acceptor. 2 residues coordinate Mg(2+): asparagine 636 and glutamate 677.

This sequence belongs to the protein kinase superfamily. Ser/Thr protein kinase family. WEE1 subfamily.

It carries out the reaction L-seryl-[protein] + ATP = O-phospho-L-seryl-[protein] + ADP + H(+). It catalyses the reaction L-threonyl-[protein] + ATP = O-phospho-L-threonyl-[protein] + ADP + H(+). This chain is Probable protein kinase DDB_G0277539, found in Dictyostelium discoideum (Social amoeba).